We begin with the raw amino-acid sequence, 560 residues long: Leucine-rich repeat and IQ domain-containing protein 4 (560 aa).

Positions 1-20 (MSKDIKSVEHSPKIHQRNDP) are disordered. LRR repeat units lie at residues 23-47 (VNDR…IFTF), 48-70 (TELE…IQRL), 72-95 (NIRV…LLSS), 97-116 (ESLD…VVSF), 117-140 (LHAL…IFKN), 141-164 (LHHL…IVNQ), 166-187 (KLRE…LCVL), 188-210 (YTLE…IGHL), 212-233 (GLQK…LCQC), 234-256 (SQLS…FAEL), 258-281 (KMTE…RWTS), 283-301 (HLLY…SFRC), 302-325 (LVNL…ICAL), 326-348 (KNLE…LGSL), 350-371 (KLKI…VLSL), 374-397 (LEKL…IRKL), 398-422 (QSLK…SMPN), 424-443 (EVLD…ICQA), 444-466 (QALK…LDSL), and 468-489 (NLKV…VCAE). Residues 504–533 (RNIMATKIQAWWRGTMVQRGFGKFGELLKP) enclose the IQ domain. A disordered region spans residues 529–560 (ELLKPQKKGKTSPKDKKGKKDVKGKPGKGKKK). Residues 533 to 560 (PQKKGKTSPKDKKGKKDVKGKPGKGKKK) are compositionally biased toward basic residues.

The chain is Leucine-rich repeat and IQ domain-containing protein 4 (LRRIQ4) from Homo sapiens (Human).